Reading from the N-terminus, the 207-residue chain is Thiamine-phosphate synthase (207 aa).

4-amino-2-methyl-5-(diphosphooxymethyl)pyrimidine is bound by residues 35–39 (QYRDK) and N67. Mg(2+) contacts are provided by D68 and D86. A 4-amino-2-methyl-5-(diphosphooxymethyl)pyrimidine-binding site is contributed by T105. 132 to 134 (SVT) contacts 2-[(2R,5Z)-2-carboxy-4-methylthiazol-5(2H)-ylidene]ethyl phosphate. K135 lines the 4-amino-2-methyl-5-(diphosphooxymethyl)pyrimidine pocket. G162 contacts 2-[(2R,5Z)-2-carboxy-4-methylthiazol-5(2H)-ylidene]ethyl phosphate.

This sequence belongs to the thiamine-phosphate synthase family. The cofactor is Mg(2+).

The enzyme catalyses 2-[(2R,5Z)-2-carboxy-4-methylthiazol-5(2H)-ylidene]ethyl phosphate + 4-amino-2-methyl-5-(diphosphooxymethyl)pyrimidine + 2 H(+) = thiamine phosphate + CO2 + diphosphate. The catalysed reaction is 2-(2-carboxy-4-methylthiazol-5-yl)ethyl phosphate + 4-amino-2-methyl-5-(diphosphooxymethyl)pyrimidine + 2 H(+) = thiamine phosphate + CO2 + diphosphate. It catalyses the reaction 4-methyl-5-(2-phosphooxyethyl)-thiazole + 4-amino-2-methyl-5-(diphosphooxymethyl)pyrimidine + H(+) = thiamine phosphate + diphosphate. The protein operates within cofactor biosynthesis; thiamine diphosphate biosynthesis; thiamine phosphate from 4-amino-2-methyl-5-diphosphomethylpyrimidine and 4-methyl-5-(2-phosphoethyl)-thiazole: step 1/1. Condenses 4-methyl-5-(beta-hydroxyethyl)thiazole monophosphate (THZ-P) and 2-methyl-4-amino-5-hydroxymethyl pyrimidine pyrophosphate (HMP-PP) to form thiamine monophosphate (TMP). The chain is Thiamine-phosphate synthase from Pseudomonas putida (strain ATCC 47054 / DSM 6125 / CFBP 8728 / NCIMB 11950 / KT2440).